A 555-amino-acid chain; its full sequence is Inositol 1,4,5-triphosphate receptor associated 2 (555 aa).

Over Met-1–Lys-495 the chain is Cytoplasmic. Disordered stretches follow at residues Ser-84 to Pro-103 and Arg-128 to Ala-147. At Thr-91 the chain carries Phosphothreonine. The span at Thr-91 to Asp-102 shows a compositional bias: low complexity. Over residues Ser-129–Ala-142 the composition is skewed to polar residues. Residues Thr-227 to Gln-341 adopt a coiled-coil conformation. Residues Ser-363, Ser-370, and Ser-424 each carry the phosphoserine modification. The disordered stretch occupies residues Glu-437–Lys-469. A compositionally biased stretch (basic and acidic residues) spans Thr-451 to Asn-465. The chain crosses the membrane as a helical; Anchor for type IV membrane protein span at residues Ala-496 to Gly-516. Residues Gln-517–Val-555 are Lumenal-facing.

This sequence belongs to the IRAG2 family. As to quaternary structure, interacts (via coiled-coil domain) with ITPR3. Interacts with SUN1 and SUN2. Interacts with microtubules. Interacts with HCN4; regulates HCN4 channel activity. Post-translationally, the removal of the C-terminal lumenal domain occurs by proteolytic processing. In terms of tissue distribution, expressed at high levels in pre B-cells, mature B-cells and pre T-cells. Expressed at low levels in mature T-cells and plasma B-cells. Expressed in germinal center B-cells, splenic marginal zone cells and B-cell lymphomas. Expressed in neuronal cells in the cerebral cortex, epithelial cells in tonsil, adrenal glands, zymogen-producing cells in the stomach and epithelial cells in seminal vesicles.

It is found in the cytoplasm. Its subcellular location is the endoplasmic reticulum membrane. The protein resides in the nucleus envelope. The protein localises to the cytoskeleton. It localises to the microtubule organizing center. It is found in the centrosome. Its subcellular location is the spindle pole. The protein resides in the chromosome. Functionally, plays a role in the delivery of peptides to major histocompatibility complex (MHC) class I molecules; this occurs in a transporter associated with antigen processing (TAP)-independent manner. May play a role in taste signal transduction via ITPR3. May play a role during fertilization in pronucleus congression and fusion. Plays a role in maintaining nuclear shape, maybe as a component of the LINC complex and through interaction with microtubules. Plays a role in the regulation of cellular excitability by regulating the hyperpolarization-activated cyclic nucleotide-gated HCN4 channel activity. The chain is Inositol 1,4,5-triphosphate receptor associated 2 from Homo sapiens (Human).